The primary structure comprises 616 residues: Dihydroxy-acid dehydratase (616 aa).

D81 is a binding site for Mg(2+). C122 serves as a coordination point for [2Fe-2S] cluster. Residues D123 and K124 each contribute to the Mg(2+) site. At K124 the chain carries N6-carboxylysine. Residue C195 participates in [2Fe-2S] cluster binding. E491 lines the Mg(2+) pocket. S517 functions as the Proton acceptor in the catalytic mechanism.

This sequence belongs to the IlvD/Edd family. Homodimer. It depends on [2Fe-2S] cluster as a cofactor. The cofactor is Mg(2+).

The enzyme catalyses (2R)-2,3-dihydroxy-3-methylbutanoate = 3-methyl-2-oxobutanoate + H2O. The catalysed reaction is (2R,3R)-2,3-dihydroxy-3-methylpentanoate = (S)-3-methyl-2-oxopentanoate + H2O. It functions in the pathway amino-acid biosynthesis; L-isoleucine biosynthesis; L-isoleucine from 2-oxobutanoate: step 3/4. Its pathway is amino-acid biosynthesis; L-valine biosynthesis; L-valine from pyruvate: step 3/4. Its function is as follows. Functions in the biosynthesis of branched-chain amino acids. Catalyzes the dehydration of (2R,3R)-2,3-dihydroxy-3-methylpentanoate (2,3-dihydroxy-3-methylvalerate) into 2-oxo-3-methylpentanoate (2-oxo-3-methylvalerate) and of (2R)-2,3-dihydroxy-3-methylbutanoate (2,3-dihydroxyisovalerate) into 2-oxo-3-methylbutanoate (2-oxoisovalerate), the penultimate precursor to L-isoleucine and L-valine, respectively. The chain is Dihydroxy-acid dehydratase from Serratia proteamaculans (strain 568).